A 337-amino-acid chain; its full sequence is Serpentine receptor class alpha-17 (337 aa).

Transmembrane regions (helical) follow at residues 28-48 (LNFV…GLAI), 110-130 (ELYF…SLTF), 155-175 (IIQL…VPLV), 197-217 (FRTA…YLSV), 247-267 (CILI…VNYI), and 282-302 (IAPF…VIYF).

The protein belongs to the nematode receptor-like protein sra family.

Its subcellular location is the membrane. In Caenorhabditis elegans, this protein is Serpentine receptor class alpha-17 (sra-17).